The sequence spans 956 residues: Glutamate receptor ionotropic, kainate 4 (956 aa).

The N-terminal stretch at 1–20 is a signal peptide; it reads MPRVSAPLVLLPAWLVMVAC. The Extracellular segment spans residues 21–545; the sequence is SPHSLRIAAI…YFSFLDPFSP (525 aa). N-linked (GlcNAc...) asparagine glycosylation is found at Asn158, Asn220, Asn272, Asn286, Asn323, Asn408, Asn415, and Asn479. Positions 500, 502, and 507 each coordinate L-glutamate. A helical transmembrane segment spans residues 546–566; it reads GVWLFMLLAYLAVSCVLFLVA. Topologically, residues 567 to 623 are cytoplasmic; sequence RLTPYEWYSPHPCAQGRCNLLVNQYSLGNSLWFPVGGFMQQGSTIAPRALSTRCVSG. The helical transmembrane segment at 624-644 threads the bilayer; it reads VWWAFTLIIISSYTANLAAFL. Residues 645–804 are Extracellular-facing; sequence TVQRMDVPIE…HRAKGLGMEN (160 aa). Positions 674, 675, and 723 each coordinate L-glutamate. Asn736 is a glycosylation site (N-linked (GlcNAc...) asparagine). A helical transmembrane segment spans residues 805-825; the sequence is IGGIFVVLICGLIVAIFMAML. Residues 826–956 lie on the Cytoplasmic side of the membrane; the sequence is EFLWTLRHSE…EKTTNSSEPE (131 aa). Disordered regions lie at residues 863 to 889 and 931 to 956; these read RRRA…TLSN and LRAR…SEPE. Basic and acidic residues predominate over residues 939-948; it reads RSEESLEWEK.

It belongs to the glutamate-gated ion channel (TC 1.A.10.1) family. GRIK4 subfamily. In terms of assembly, homodimer. Can form functional heteromeric receptors with GRIK1, GRIK2 and GRIK3.

The protein localises to the cell membrane. It localises to the postsynaptic cell membrane. Its subcellular location is the presynaptic cell membrane. Ionotropic glutamate receptor that functions as a cation-permeable ligand-gated ion channel. Cannot form functional channels on its own. Shows channel activity only in heteromeric assembly with GRIK1, GRIK2 and GRIK3 subunits. The sequence is that of Glutamate receptor ionotropic, kainate 4 (GRIK4) from Homo sapiens (Human).